We begin with the raw amino-acid sequence, 232 residues long: Ubiquitin-conjugating enzyme E2-24 kDa (232 aa).

Residues Met-1–Ser-37 show a composition bias toward low complexity. The interval Met-1 to Ser-87 is disordered. The span at Gly-58–Gly-67 shows a compositional bias: gly residues. In terms of domain architecture, UBC core spans Thr-86–Thr-232. Cys-170 serves as the catalytic Glycyl thioester intermediate.

It belongs to the ubiquitin-conjugating enzyme family.

The catalysed reaction is S-ubiquitinyl-[E1 ubiquitin-activating enzyme]-L-cysteine + [E2 ubiquitin-conjugating enzyme]-L-cysteine = [E1 ubiquitin-activating enzyme]-L-cysteine + S-ubiquitinyl-[E2 ubiquitin-conjugating enzyme]-L-cysteine.. Its pathway is protein modification; protein ubiquitination. Catalyzes the covalent attachment of ubiquitin to other proteins. The protein is Ubiquitin-conjugating enzyme E2-24 kDa of Drosophila melanogaster (Fruit fly).